The chain runs to 450 residues: Phosphoglucosamine mutase (450 aa).

Serine 102 functions as the Phosphoserine intermediate in the catalytic mechanism. Mg(2+)-binding residues include serine 102, aspartate 244, aspartate 246, and aspartate 248. At serine 102 the chain carries Phosphoserine.

Belongs to the phosphohexose mutase family. The cofactor is Mg(2+). Post-translationally, activated by phosphorylation.

It carries out the reaction alpha-D-glucosamine 1-phosphate = D-glucosamine 6-phosphate. Functionally, catalyzes the conversion of glucosamine-6-phosphate to glucosamine-1-phosphate. The protein is Phosphoglucosamine mutase of Syntrophomonas wolfei subsp. wolfei (strain DSM 2245B / Goettingen).